The chain runs to 97 residues: Small ribosomal subunit protein bS6 (97 aa).

The protein belongs to the bacterial ribosomal protein bS6 family.

In terms of biological role, binds together with bS18 to 16S ribosomal RNA. The protein is Small ribosomal subunit protein bS6 of Lactococcus lactis subsp. cremoris (strain MG1363).